A 115-amino-acid polypeptide reads, in one-letter code: MSDTILKCTTRHVRIFTAVVENNDLILDNGHLTLDIDPDNEFSWSDQSIKKVQDYFRELVELQADNELSDYTLRKIGSLLEDFIRKLLKDGELSYNPNSRVMNYSMGLPRTQELL.

Belongs to the complex I NdhM subunit family. In terms of assembly, NDH-1 can be composed of about 15 different subunits; different subcomplexes with different compositions have been identified which probably have different functions.

It is found in the cellular thylakoid membrane. It carries out the reaction a plastoquinone + NADH + (n+1) H(+)(in) = a plastoquinol + NAD(+) + n H(+)(out). It catalyses the reaction a plastoquinone + NADPH + (n+1) H(+)(in) = a plastoquinol + NADP(+) + n H(+)(out). NDH-1 shuttles electrons from an unknown electron donor, via FMN and iron-sulfur (Fe-S) centers, to quinones in the respiratory and/or the photosynthetic chain. The immediate electron acceptor for the enzyme in this species is believed to be plastoquinone. Couples the redox reaction to proton translocation, and thus conserves the redox energy in a proton gradient. Cyanobacterial NDH-1 also plays a role in inorganic carbon-concentration. The protein is NAD(P)H-quinone oxidoreductase subunit M of Prochlorococcus marinus (strain NATL1A).